Consider the following 494-residue polypeptide: Alpha-amylase-related protein (494 aa).

The signal sequence occupies residues 1–20 (MFKFATAVILCLVAASSTLA). The residue at position 21 (Q21) is a Pyrrolidone carboxylic acid. Residues C48 and C104 are joined by a disulfide bond. Residues N118, Q169, and D178 each contribute to the Ca(2+) site. A disulfide bridge connects residues C157 and C171. R206 provides a ligand contact to chloride. D208 (nucleophile) is an active-site residue. Residue H212 coordinates Ca(2+). Residue E245 is the Proton donor of the active site. The chloride site is built by N308 and R343. Disulfide bonds link C376–C382, C418–C441, and C448–C460.

This sequence belongs to the glycosyl hydrolase 13 family. In terms of assembly, monomer. The cofactor is Ca(2+). Requires chloride as cofactor.

The protein localises to the secreted. It catalyses the reaction Endohydrolysis of (1-&gt;4)-alpha-D-glucosidic linkages in polysaccharides containing three or more (1-&gt;4)-alpha-linked D-glucose units.. This chain is Alpha-amylase-related protein (Amyrel), found in Drosophila bipectinata (Fruit fly).